A 22-amino-acid chain; its full sequence is Mu-conotoxin KIIIB (22 aa).

Residues 1-2 constitute a propeptide that is removed on maturation; sequence KR. Cystine bridges form between cysteine 5–cysteine 13, cysteine 5–cysteine 19, cysteine 5–cysteine 20, cysteine 6–cysteine 13, cysteine 6–cysteine 19, cysteine 8–cysteine 19, and cysteine 8–cysteine 20. Pharmacophore key residues stretches follow at residues 14-16 and 18-19; these read RDH and RC. A Cysteine amide modification is found at cysteine 20.

This sequence belongs to the conotoxin M superfamily. In terms of assembly, monomer. Post-translationally, toxins with three different disulfide connectivities have been synthesized. The conotoxin mu-KIIIA-P1 shows the connectivity C1-C5, C2-C4, and C3-C6, whereas mu-KIIIA-P2 shows the connectivity C1-C6, C2-C4, and C3-C5. The conotoxin mu-KIIIA-N has the 'native' fold of the mu-conotoxin family (C1-C4, C2-C5, and C3-C6). Mu-KIIIA-P1 and mu-KIIIA-P2 are obtained by both thermodynamic oxidative folding and regioselective synthesis. Mu-KIIIA-P1 is the major oxidative folding product. Mu-KIIIA-N is only obtained by regioselective synthesis. Expressed by the venom duct.

Its subcellular location is the secreted. Its function is as follows. Mu-conotoxin KIIIA-P1: mu-conotoxins block voltage-gated sodium channels (Nav). This toxin potently blocks Nav1.2/SCN2A (IC(50)5-124 nM), Nav1.4/SCN4A (IC(50)=20-90 nM), and Nav1.7/SCN9A (IC(50)=290-413 nM). It moderately blocks Nav1.1/SCN1A, and mNav1.6/SCN8A. It also shows a very low activity on Nav1.3/SCN3A. This toxin binds a microsite within the pore different from the tetrodotoxin binding site 1 (tested on Nav1.2). The block is partial, with a residual current that can be completely blocked by TTX. The toxin probably docks at a more superficial site in the outer vestibule of the channel than does TTX. On rNav1.2/SCN2A, it produces a block that is only partially reversible. The block of Nav1.7 is modified when beta-subunits are coexpressed with the alpha subunit. Hence, blocks of channels containing beta-1 and beta-3 subunits are more potent (compared to channels without beta subunits), whereas blocks of channels containing beta-2 and beta-4 subunits are less potent (compared to channels without beta subunits). Mu-conotoxin KIIIA-P2: This toxin potently blocks Nav1.2/SCN2A (Kd=230 nM, IC(50)=1.37 uM) and Nav1.4/SCN4A (Kd=830 nM, IC(50)=2 uM). It also moderately blocks Nav1.7/SCN9A (Kd=1.57 uM, IC(50)=5.4 uM). In addition, this toxin may also inhibit other sodium channels, as does Mu-conotoxin KIIIA-P1. In terms of biological role, mu-conotoxin KIIIA-N: This toxin moderately blocks Nav1.2/SCN2A (IC(50)=875 nM), Nav1.4/SCN4A (IC(50)=472 nM), and Nav1.7/SCN9A (IC(50)=887 nM). Functionally, mu-conotoxin KIIIB-P1: This toxin potently blocks Nav1.2/SCN2A (Kd=470 nM). In addition, this toxin may also inhibit other sodium channels, as does Mu-conotoxin KIIIA-P1. Its function is as follows. Mu-conotoxin KIIIB-P2: This toxin potently blocks Nav1.2/SCN2A (Kd=26 nM). In addition, this toxin may also inhibit other sodium channels, as does Mu-conotoxin KIIIA-P1. This is Mu-conotoxin KIIIB from Conus kinoshitai (Kinoshita's cone).